A 307-amino-acid polypeptide reads, in one-letter code: Homoserine kinase (307 aa).

Position 95 to 105 (95 to 105) interacts with ATP; sequence PQSRGLGSSAS.

It belongs to the GHMP kinase family. Homoserine kinase subfamily.

It localises to the cytoplasm. It catalyses the reaction L-homoserine + ATP = O-phospho-L-homoserine + ADP + H(+). It participates in amino-acid biosynthesis; L-threonine biosynthesis; L-threonine from L-aspartate: step 4/5. In terms of biological role, catalyzes the ATP-dependent phosphorylation of L-homoserine to L-homoserine phosphate. This Corynebacterium aurimucosum (strain ATCC 700975 / DSM 44827 / CIP 107346 / CN-1) (Corynebacterium nigricans) protein is Homoserine kinase.